An 80-amino-acid chain; its full sequence is Protein FAM229B (80 aa).

Residues 1 to 44 form a disordered region; sequence MPFQFGTQPRRFPVEGGDSSIELEPGLSSSAACNGKEMSPTRQL.

It belongs to the FAM229 family.

The protein is Protein FAM229B (FAM229B) of Homo sapiens (Human).